A 627-amino-acid chain; its full sequence is 1-deoxy-D-xylulose-5-phosphate synthase (627 aa).

Thiamine diphosphate contacts are provided by residues histidine 80 and 121–123 (GHS). A Mg(2+)-binding site is contributed by aspartate 152. Thiamine diphosphate is bound by residues 153-154 (GA), asparagine 181, tyrosine 288, and glutamate 370. Residue asparagine 181 coordinates Mg(2+).

This sequence belongs to the transketolase family. DXPS subfamily. Homodimer. The cofactor is Mg(2+). Thiamine diphosphate is required as a cofactor.

The enzyme catalyses D-glyceraldehyde 3-phosphate + pyruvate + H(+) = 1-deoxy-D-xylulose 5-phosphate + CO2. It functions in the pathway metabolic intermediate biosynthesis; 1-deoxy-D-xylulose 5-phosphate biosynthesis; 1-deoxy-D-xylulose 5-phosphate from D-glyceraldehyde 3-phosphate and pyruvate: step 1/1. Its function is as follows. Catalyzes the acyloin condensation reaction between C atoms 2 and 3 of pyruvate and glyceraldehyde 3-phosphate to yield 1-deoxy-D-xylulose-5-phosphate (DXP). This chain is 1-deoxy-D-xylulose-5-phosphate synthase, found in Vibrio atlanticus (strain LGP32) (Vibrio splendidus (strain Mel32)).